The following is a 238-amino-acid chain: Acyl-protein thioesterase 1 (238 aa).

Active-site charge relay system residues include serine 120, aspartate 174, and histidine 219.

This sequence belongs to the AB hydrolase superfamily. AB hydrolase 2 family.

The protein resides in the cytoplasm. It is found in the nucleus. The catalysed reaction is S-hexadecanoyl-L-cysteinyl-[protein] + H2O = L-cysteinyl-[protein] + hexadecanoate + H(+). Its function is as follows. Hydrolyzes fatty acids from S-acylated cysteine residues in proteins with a strong preference for palmitoylated G-alpha proteins over other acyl substrates. Mediates the deacylation of G-alpha proteins such as GPA1 in vivo, but has weak or no activity toward palmitoylated Ras proteins. Has weak lysophospholipase activity in vitro; however such activity may not exist in vivo. This chain is Acyl-protein thioesterase 1, found in Cryptococcus neoformans var. neoformans serotype D (strain B-3501A) (Filobasidiella neoformans).